Consider the following 2182-residue polypeptide: Autophagy-related protein 2 (2182 aa).

Disordered regions lie at residues 291 to 375, 392 to 426, 523 to 630, 663 to 682, 736 to 758, and 793 to 816; these read SPSL…PLAD, EQDY…ATPR, YTHE…STTL, DIDP…VATP, GAFS…SSVE, and DKKP…SKET. Composition is skewed to polar residues over residues 303–313 and 322–331; these read NPPSRQATELS and VSSSQASIRS. Residues 332–347 show a composition bias toward basic and acidic residues; sequence NEPESASHHSLPENDH. Acidic residues-rich tracts occupy residues 528 to 540 and 613 to 624; these read AENE…EQTT and WDDDYDDPEEEP. Positions 745 to 758 are enriched in polar residues; it reads HAQQRSSQGTSSVE. Basic and acidic residues predominate over residues 793 to 813; that stretch reads DKKPSPAEGSKQDTASKDAPS.

Belongs to the ATG2 family. In terms of assembly, interacts with ATG18.

It localises to the preautophagosomal structure membrane. Its subcellular location is the endoplasmic reticulum membrane. It catalyses the reaction a 1,2-diacyl-sn-glycero-3-phosphocholine(in) = a 1,2-diacyl-sn-glycero-3-phosphocholine(out). It carries out the reaction a 1,2-diacyl-sn-glycero-3-phospho-L-serine(in) = a 1,2-diacyl-sn-glycero-3-phospho-L-serine(out). The enzyme catalyses a 1,2-diacyl-sn-glycero-3-phosphoethanolamine(in) = a 1,2-diacyl-sn-glycero-3-phosphoethanolamine(out). Functionally, lipid transfer protein required for autophagosome completion and peroxisome degradation and peroxisome degradation. Tethers the edge of the isolation membrane (IM) to the endoplasmic reticulum (ER) and mediates direct lipid transfer from ER to IM for IM expansion. ATG2 binds to the ER exit site (ERES), which is the membrane source for autophagosome formation, using basic residues in its N-terminal region (NR) and to the expanding edge of the IM through its C-terminal region. The latter binding is assisted by an ATG18-PtdIns3P interaction. ATG2 then extracts phospholipids from the membrane source using its NR and transfers them to ATG9 to the IM through its predicted beta-sheet-rich structure for membrane expansion. Autophagy is required for proper vegetative growth, asexual/sexual reproduction, and full virulence. Autophagy is particularly involved in the biosynthesis of deoxynivalenol (DON), an important virulence determinant. This Gibberella zeae (strain ATCC MYA-4620 / CBS 123657 / FGSC 9075 / NRRL 31084 / PH-1) (Wheat head blight fungus) protein is Autophagy-related protein 2.